Here is a 329-residue protein sequence, read N- to C-terminus: Phosphate acyltransferase (329 aa).

It belongs to the PlsX family. In terms of assembly, homodimer. Probably interacts with PlsY.

Its subcellular location is the cytoplasm. It carries out the reaction a fatty acyl-[ACP] + phosphate = an acyl phosphate + holo-[ACP]. It participates in lipid metabolism; phospholipid metabolism. In terms of biological role, catalyzes the reversible formation of acyl-phosphate (acyl-PO(4)) from acyl-[acyl-carrier-protein] (acyl-ACP). This enzyme utilizes acyl-ACP as fatty acyl donor, but not acyl-CoA. In Campylobacter fetus subsp. fetus (strain 82-40), this protein is Phosphate acyltransferase.